The primary structure comprises 342 residues: Anthranilate phosphoribosyltransferase (342 aa).

5-phospho-alpha-D-ribose 1-diphosphate is bound by residues glycine 83, 86–87 (GD), threonine 91, 93–96 (NIST), 111–119 (KHGGRSVSS), and serine 123. Residue glycine 83 participates in anthranilate binding. Serine 95 contacts Mg(2+). Arginine 169 contributes to the anthranilate binding site. 2 residues coordinate Mg(2+): aspartate 228 and glutamate 229.

This sequence belongs to the anthranilate phosphoribosyltransferase family. In terms of assembly, homodimer. Requires Mg(2+) as cofactor.

It catalyses the reaction N-(5-phospho-beta-D-ribosyl)anthranilate + diphosphate = 5-phospho-alpha-D-ribose 1-diphosphate + anthranilate. The protein operates within amino-acid biosynthesis; L-tryptophan biosynthesis; L-tryptophan from chorismate: step 2/5. Catalyzes the transfer of the phosphoribosyl group of 5-phosphorylribose-1-pyrophosphate (PRPP) to anthranilate to yield N-(5'-phosphoribosyl)-anthranilate (PRA). This Chromobacterium violaceum (strain ATCC 12472 / DSM 30191 / JCM 1249 / CCUG 213 / NBRC 12614 / NCIMB 9131 / NCTC 9757 / MK) protein is Anthranilate phosphoribosyltransferase.